The following is a 244-amino-acid chain: Uridylate kinase (244 aa).

19–22 (KVSG) lines the ATP pocket. The interval 27–32 (GERGFG) is involved in allosteric activation by GTP. G61 is a binding site for UMP. G62 and R66 together coordinate ATP. UMP-binding positions include D80 and 141–148 (IGSPFFTT). 4 residues coordinate ATP: T168, Q169, Y174, and D177.

Belongs to the UMP kinase family. As to quaternary structure, homohexamer.

Its subcellular location is the cytoplasm. It catalyses the reaction UMP + ATP = UDP + ADP. It participates in pyrimidine metabolism; CTP biosynthesis via de novo pathway; UDP from UMP (UMPK route): step 1/1. Its activity is regulated as follows. Allosterically activated by GTP. Inhibited by UTP. Catalyzes the reversible phosphorylation of UMP to UDP. This Anaplasma phagocytophilum (strain HZ) protein is Uridylate kinase.